We begin with the raw amino-acid sequence, 389 residues long: Major outer membrane porin (389 aa).

This sequence belongs to the chlamydial porin (CP) (TC 1.B.2) family. In terms of assembly, part of a disulfide cross-linked outer membrane complex (COMC) composed of the major outer membrane porin (MOMP), the small cysteine-rich protein (OmcA) and the large cysteine-rich periplasmic protein (OmcB).

The protein resides in the cell outer membrane. In elementary bodies (EBs, the infectious stage, which is able to survive outside the host cell) provides the structural integrity of the outer envelope through disulfide cross-links with the small cysteine-rich protein and the large cysteine-rich periplasmic protein. It has been described in publications as the Sarkosyl-insoluble COMC (Chlamydia outer membrane complex), and serves as the functional equivalent of peptidoglycan. Functionally, permits diffusion of specific solutes through the outer membrane. The polypeptide is Major outer membrane porin (ompA) (Chlamydia pneumoniae (Chlamydophila pneumoniae)).